The following is a 496-amino-acid chain: Glycine receptor subunit beta (496 aa).

The signal sequence occupies residues Met1 to Ala22. At Lys23–Phe268 the chain is on the extracellular side. Residues Gly32–Pro53 are disordered. Residue Asn54 is glycosylated (N-linked (GlcNAc...) asparagine). Glycine is bound by residues Arg108 and Ser174. The cysteines at positions 183 and 197 are disulfide-linked. Asn242 is a glycosylation site (N-linked (GlcNAc...) asparagine). The cysteines at positions 243 and 255 are disulfide-linked. Thr250 serves as a coordination point for glycine. The chain crosses the membrane as a helical span at residues Tyr269–Trp289. Residues Ile290–Ala294 lie on the Cytoplasmic side of the membrane. Residues Ser295–Thr315 traverse the membrane as a helical segment. Residues Leu316 to Lys327 are Extracellular-facing. A helical membrane pass occupies residues Ala328 to Val349. Topologically, residues Val350 to Arg471 are cytoplasmic. Thr391 is modified (phosphothreonine). A helical membrane pass occupies residues Ile472–Tyr495. A topological domain (extracellular) is located at residue Leu496.

The protein belongs to the ligand-gated ion channel (TC 1.A.9) family. Glycine receptor (TC 1.A.9.3) subfamily. GLRB sub-subfamily. As to quaternary structure, forms heteropentamers with glycin receptor alpha subunits. Heteropentamers with GLRA1 can be composed of two GLRA1 and three GLRB subunits, or three GLRA1 and two GLRB subunits, or four GLRA1 subunits and one GLRB subunit. Forms heteropentamers with GLRA2. Functional GLRB-GLRA2 heteropentamers contain four GLRA2 subunits and one GLRB subunit, although alternative subunit composition cannot be excluded. Forms a heteropentamer with GLRA3. Interacts with GPHN. As to expression, detected in spinal cord, brain and brain stem, especially in the periolivary region, spinal nuclei, trigeminal nucleus, medulla oblongata, pons and midbrain. Detected in the inner plexiform layer of the retina (at protein level). High levels of expression in cortex, hippocampus, thalamus and cerebellum. Detected in spinal cord.

The protein resides in the postsynaptic cell membrane. Its subcellular location is the synapse. It is found in the cell projection. It localises to the dendrite. The protein localises to the cell membrane. The protein resides in the cytoplasm. The enzyme catalyses chloride(in) = chloride(out). With respect to regulation, channel opening is triggered by extracellular glycine. Heteropentameric channels composed of GLRB and GLRA1 are activated by lower glycine levels than homopentameric GLRA1. Its function is as follows. Subunit of heteromeric glycine-gated chloride channels. Plays an important role in the down-regulation of neuronal excitability. Contributes to the generation of inhibitory postsynaptic currents. The polypeptide is Glycine receptor subunit beta (Glrb) (Mus musculus (Mouse)).